The chain runs to 286 residues: Homoserine kinase (286 aa).

78–88 (PLARGLGSSSS) is a binding site for ATP.

Belongs to the GHMP kinase family. Homoserine kinase subfamily.

Its subcellular location is the cytoplasm. The catalysed reaction is L-homoserine + ATP = O-phospho-L-homoserine + ADP + H(+). Its pathway is amino-acid biosynthesis; L-threonine biosynthesis; L-threonine from L-aspartate: step 4/5. Catalyzes the ATP-dependent phosphorylation of L-homoserine to L-homoserine phosphate. In Streptococcus thermophilus (strain CNRZ 1066), this protein is Homoserine kinase.